Here is a 151-residue protein sequence, read N- to C-terminus: Chaperonin GroEL (151 aa).

41 to 45 provides a ligand contact to ATP; the sequence is DGTTT.

Belongs to the chaperonin (HSP60) family. As to quaternary structure, forms a cylinder of 14 subunits composed of two heptameric rings stacked back-to-back. Interacts with the co-chaperonin GroES.

It localises to the cytoplasm. It carries out the reaction ATP + H2O + a folded polypeptide = ADP + phosphate + an unfolded polypeptide.. Its function is as follows. Together with its co-chaperonin GroES, plays an essential role in assisting protein folding. The GroEL-GroES system forms a nano-cage that allows encapsulation of the non-native substrate proteins and provides a physical environment optimized to promote and accelerate protein folding. The chain is Chaperonin GroEL from Mycobacterium avium.